Here is an 87-residue protein sequence, read N- to C-terminus: Small ribosomal subunit protein bS20 (87 aa).

The interval 1–22 is disordered; the sequence is MANSAGSKKRARQAVKSRAHNG. Over residues 7–19 the composition is skewed to basic residues; the sequence is SKKRARQAVKSRA.

Belongs to the bacterial ribosomal protein bS20 family.

Its function is as follows. Binds directly to 16S ribosomal RNA. The sequence is that of Small ribosomal subunit protein bS20 from Marinomonas sp. (strain MWYL1).